Consider the following 208-residue polypeptide: Exosome complex component CSL4 homolog (208 aa).

Component of the RNA exosome complex. In terms of tissue distribution, ubiquitously expressed.

It localises to the nucleus. Its subcellular location is the nucleolus. It is found in the nucleoplasm. Its function is as follows. Non-catalytic component of the RNA exosome complex which has 3'-&gt;5' exoribonuclease activity and participates in a multitude of cellular RNA processing and degradation events. Involved in regulation of antisense ribosomal siRNA production. Involved in response to cold-warm shock. The polypeptide is Exosome complex component CSL4 homolog (Caenorhabditis elegans).